We begin with the raw amino-acid sequence, 432 residues long: Serine hydroxymethyltransferase (432 aa).

(6S)-5,6,7,8-tetrahydrofolate contacts are provided by residues Leu-131 and 135–137 (GHL). Lys-240 bears the N6-(pyridoxal phosphate)lysine mark.

The protein belongs to the SHMT family. As to quaternary structure, homodimer. The cofactor is pyridoxal 5'-phosphate.

The protein localises to the cytoplasm. The enzyme catalyses (6R)-5,10-methylene-5,6,7,8-tetrahydrofolate + glycine + H2O = (6S)-5,6,7,8-tetrahydrofolate + L-serine. Its pathway is one-carbon metabolism; tetrahydrofolate interconversion. It functions in the pathway amino-acid biosynthesis; glycine biosynthesis; glycine from L-serine: step 1/1. Functionally, catalyzes the reversible interconversion of serine and glycine with tetrahydrofolate (THF) serving as the one-carbon carrier. This reaction serves as the major source of one-carbon groups required for the biosynthesis of purines, thymidylate, methionine, and other important biomolecules. Also exhibits THF-independent aldolase activity toward beta-hydroxyamino acids, producing glycine and aldehydes, via a retro-aldol mechanism. This Bradyrhizobium diazoefficiens (strain JCM 10833 / BCRC 13528 / IAM 13628 / NBRC 14792 / USDA 110) protein is Serine hydroxymethyltransferase.